A 269-amino-acid polypeptide reads, in one-letter code: Indole-3-glycerol phosphate synthase (269 aa).

The protein belongs to the TrpC family.

It carries out the reaction 1-(2-carboxyphenylamino)-1-deoxy-D-ribulose 5-phosphate + H(+) = (1S,2R)-1-C-(indol-3-yl)glycerol 3-phosphate + CO2 + H2O. It participates in amino-acid biosynthesis; L-tryptophan biosynthesis; L-tryptophan from chorismate: step 4/5. This is Indole-3-glycerol phosphate synthase from Rhodococcus opacus (strain B4).